Consider the following 238-residue polypeptide: Uridylate kinase (238 aa).

Residue 12–15 (KLSG) coordinates ATP. G54 contacts UMP. Residues G55 and R59 each coordinate ATP. UMP contacts are provided by residues D74 and 135–142 (TGNPFFTT). Positions 162, 168, and 171 each coordinate ATP.

The protein belongs to the UMP kinase family. Homohexamer.

The protein localises to the cytoplasm. It carries out the reaction UMP + ATP = UDP + ADP. The protein operates within pyrimidine metabolism; CTP biosynthesis via de novo pathway; UDP from UMP (UMPK route): step 1/1. Its activity is regulated as follows. Inhibited by UTP. Functionally, catalyzes the reversible phosphorylation of UMP to UDP. The polypeptide is Uridylate kinase (Dechloromonas aromatica (strain RCB)).